The chain runs to 469 residues: Probable glycine dehydrogenase (decarboxylating) subunit 1 (469 aa).

The protein belongs to the GcvP family. N-terminal subunit subfamily. As to quaternary structure, the glycine cleavage system is composed of four proteins: P, T, L and H. In this organism, the P 'protein' is a heterodimer of two subunits.

It catalyses the reaction N(6)-[(R)-lipoyl]-L-lysyl-[glycine-cleavage complex H protein] + glycine + H(+) = N(6)-[(R)-S(8)-aminomethyldihydrolipoyl]-L-lysyl-[glycine-cleavage complex H protein] + CO2. In terms of biological role, the glycine cleavage system catalyzes the degradation of glycine. The P protein binds the alpha-amino group of glycine through its pyridoxal phosphate cofactor; CO(2) is released and the remaining methylamine moiety is then transferred to the lipoamide cofactor of the H protein. The sequence is that of Probable glycine dehydrogenase (decarboxylating) subunit 1 from Staphylothermus marinus (strain ATCC 43588 / DSM 3639 / JCM 9404 / F1).